We begin with the raw amino-acid sequence, 175 residues long: Orotate phosphoribosyltransferase (175 aa).

5-phospho-alpha-D-ribose 1-diphosphate-binding positions include arginine 89, lysine 90, lysine 93, and 115–123 (EDIATTGQS). The orotate site is built by threonine 119 and arginine 147.

It belongs to the purine/pyrimidine phosphoribosyltransferase family. PyrE subfamily. In terms of assembly, homodimer. Mg(2+) is required as a cofactor.

It catalyses the reaction orotidine 5'-phosphate + diphosphate = orotate + 5-phospho-alpha-D-ribose 1-diphosphate. It functions in the pathway pyrimidine metabolism; UMP biosynthesis via de novo pathway; UMP from orotate: step 1/2. Catalyzes the transfer of a ribosyl phosphate group from 5-phosphoribose 1-diphosphate to orotate, leading to the formation of orotidine monophosphate (OMP). This Halobacterium salinarum (strain ATCC 700922 / JCM 11081 / NRC-1) (Halobacterium halobium) protein is Orotate phosphoribosyltransferase.